A 124-amino-acid chain; its full sequence is Holo-[acyl-carrier-protein] synthase (124 aa).

Mg(2+) is bound by residues Asp5 and Glu56.

The protein belongs to the P-Pant transferase superfamily. AcpS family. Mg(2+) serves as cofactor.

It localises to the cytoplasm. It catalyses the reaction apo-[ACP] + CoA = holo-[ACP] + adenosine 3',5'-bisphosphate + H(+). Transfers the 4'-phosphopantetheine moiety from coenzyme A to a Ser of acyl-carrier-protein. This is Holo-[acyl-carrier-protein] synthase from Campylobacter hominis (strain ATCC BAA-381 / DSM 21671 / CCUG 45161 / LMG 19568 / NCTC 13146 / CH001A).